The primary structure comprises 200 residues: MSEALNELATYLTEVRGALISSSEIKYGELNVTTTAENVIALLTFLRDDAKCGFVNMTDICGVDWPQRPDRFDVVYHLLSPKKNLRIRIKVPVAEDQPVPSACGIYPGADWFERETWDMYGVLFTGHPDLRRILTDYGFEGHPLRKDFPTTGFVEVRYDDAAKRVVYEPVELKQEFRNFDFLSPWEGTDYVLPGDEKAKA.

It belongs to the complex I 30 kDa subunit family. As to quaternary structure, NDH-1 is composed of 14 different subunits. Subunits NuoB, C, D, E, F, and G constitute the peripheral sector of the complex.

It localises to the cell inner membrane. The catalysed reaction is a quinone + NADH + 5 H(+)(in) = a quinol + NAD(+) + 4 H(+)(out). Its function is as follows. NDH-1 shuttles electrons from NADH, via FMN and iron-sulfur (Fe-S) centers, to quinones in the respiratory chain. The immediate electron acceptor for the enzyme in this species is believed to be ubiquinone. Couples the redox reaction to proton translocation (for every two electrons transferred, four hydrogen ions are translocated across the cytoplasmic membrane), and thus conserves the redox energy in a proton gradient. This is NADH-quinone oxidoreductase subunit C from Rhizobium rhizogenes (strain K84 / ATCC BAA-868) (Agrobacterium radiobacter).